A 630-amino-acid chain; its full sequence is DNA mismatch repair protein MutL (630 aa).

Disordered stretches follow at residues 361 to 386 (VLSS…APAE) and 407 to 431 (FERK…GQAE). Residues 407–421 (FERKQEEEVGEERCS) show a composition bias toward basic and acidic residues.

The protein belongs to the DNA mismatch repair MutL/HexB family.

Functionally, this protein is involved in the repair of mismatches in DNA. It is required for dam-dependent methyl-directed DNA mismatch repair. May act as a 'molecular matchmaker', a protein that promotes the formation of a stable complex between two or more DNA-binding proteins in an ATP-dependent manner without itself being part of a final effector complex. The protein is DNA mismatch repair protein MutL of Geobacillus kaustophilus (strain HTA426).